We begin with the raw amino-acid sequence, 408 residues long: Biphenyl dioxygenase system ferredoxin--NAD(+) reductase component (408 aa).

An FAD-binding site is contributed by 4-35 (TIAIIGAGLAGSTAARALRAQGYEGRIHLLGD). 145-173 (SLVIVGGGLIGCEVATTARKLSVHVTILE) lines the NAD(+) pocket.

This sequence belongs to the bacterial ring-hydroxylating dioxygenase ferredoxin reductase family. In terms of assembly, this dioxygenase system consists of four proteins: the two subunits of the hydroxylase component (BphA and BphE), a ferredoxin (BphF) and a ferredoxin reductase (BphG). It depends on FAD as a cofactor.

The enzyme catalyses 2 reduced [2Fe-2S]-[ferredoxin] + NAD(+) + H(+) = 2 oxidized [2Fe-2S]-[ferredoxin] + NADH. It participates in xenobiotic degradation; biphenyl degradation. Functionally, part of the electron transfer component of biphenyl dioxygenase, transfers electrons from ferredoxin (BphF) to NADH. The polypeptide is Biphenyl dioxygenase system ferredoxin--NAD(+) reductase component (bphG) (Paraburkholderia xenovorans (strain LB400)).